The primary structure comprises 88 residues: uncharacterized protein (88 aa).

This is an uncharacterized protein from Escherichia coli O157:H7.